The primary structure comprises 239 residues: Ribosomal RNA small subunit methyltransferase G (239 aa).

Residues G77, F82, 128-129 (AE), and R146 each bind S-adenosyl-L-methionine. The disordered stretch occupies residues 215–239 (DKKRQTPKKYPRKPGTPNKTPLLEK).

This sequence belongs to the methyltransferase superfamily. RNA methyltransferase RsmG family.

It localises to the cytoplasm. Specifically methylates the N7 position of guanine in position 535 of 16S rRNA. This Staphylococcus aureus (strain bovine RF122 / ET3-1) protein is Ribosomal RNA small subunit methyltransferase G.